A 200-amino-acid chain; its full sequence is Probable GTP-binding protein EngB (200 aa).

In terms of domain architecture, EngB-type G spans 22–199; that stretch reads NVAEVAFLGR…QDKITGYLFG (178 aa). GTP contacts are provided by residues 30–37, 57–61, 85–88, 155–158, and 177–180; these read GRSNVGKS, GKTQL, DLPG, TKID, and FLSN. Mg(2+) is bound by residues Ser37 and Thr59.

The protein belongs to the TRAFAC class TrmE-Era-EngA-EngB-Septin-like GTPase superfamily. EngB GTPase family. It depends on Mg(2+) as a cofactor.

Its function is as follows. Necessary for normal cell division and for the maintenance of normal septation. This Aliarcobacter butzleri (strain RM4018) (Arcobacter butzleri) protein is Probable GTP-binding protein EngB.